The chain runs to 115 residues: U3-lycotoxin-Ls1k (115 aa).

An N-terminal signal peptide occupies residues 1 to 20 (MKFVLLFGVLLVALFSYSSA). A propeptide spanning residues 21–44 (EMLDDFGQADEDELLSLIEKEEAR) is cleaved from the precursor. 4 cysteine pairs are disulfide-bonded: Cys48–Cys63, Cys55–Cys72, Cys62–Cys87, and Cys74–Cys85.

It belongs to the neurotoxin 19 (CSTX) family. 01 subfamily. As to expression, expressed by the venom gland.

It is found in the secreted. In Lycosa singoriensis (Wolf spider), this protein is U3-lycotoxin-Ls1k.